The following is a 369-amino-acid chain: Anhydro-N-acetylmuramic acid kinase (369 aa).

12–19 (GTSLDGVD) lines the ATP pocket.

The protein belongs to the anhydro-N-acetylmuramic acid kinase family.

It carries out the reaction 1,6-anhydro-N-acetyl-beta-muramate + ATP + H2O = N-acetyl-D-muramate 6-phosphate + ADP + H(+). It functions in the pathway amino-sugar metabolism; 1,6-anhydro-N-acetylmuramate degradation. It participates in cell wall biogenesis; peptidoglycan recycling. Its function is as follows. Catalyzes the specific phosphorylation of 1,6-anhydro-N-acetylmuramic acid (anhMurNAc) with the simultaneous cleavage of the 1,6-anhydro ring, generating MurNAc-6-P. Is required for the utilization of anhMurNAc either imported from the medium or derived from its own cell wall murein, and thus plays a role in cell wall recycling. In Actinobacillus pleuropneumoniae serotype 7 (strain AP76), this protein is Anhydro-N-acetylmuramic acid kinase.